The chain runs to 433 residues: MKLQHVVYLVAIFFVVAIFVIACIEENKYLVWIMIILANTTNILSLVRSISYIKNIRKHQKDTKIQRQLFFEKNGGGMLIERLSGAGSSNIDFKIFTEEDMKEATNGYDVSRILGQGGQWTVYKGILPDNSIVAIKKTRLGDNNQVEQFINEVLVLSQINHRNVVKLLGCCLETEVPLLVYEFITGGSLFDHLHGSMFVSSLTWEHRLEIAIEVAGAIAYLHSGASIPIIHRDIKTENILLDENLTAKVADFGASKLKPMDKEQLTTMVQGTLGYLDPEYYTTWLLNEKSDVYSFGVVLMELISGQKALCFERPETSKHLVSYFVLATKENRLHEIIDDQVLNEENQREIHEAARVAVECTRLKGEERPRMIEVAAELETLRAKTTKHNWLDQYPEENVHLLGSNIVSAQGHTSSRGYDNNKNVARFDIEAGR.

The first 22 residues, 1 to 22 (MKLQHVVYLVAIFFVVAIFVIA), serve as a signal peptide directing secretion. At 23–29 (CIEENKY) the chain is on the extracellular side. A helical membrane pass occupies residues 30–50 (LVWIMIILANTTNILSLVRSI). Residues 51 to 433 (SYIKNIRKHQ…VARFDIEAGR (383 aa)) lie on the Cytoplasmic side of the membrane. Thr97 is subject to Phosphothreonine. Residues 108-391 (YDVSRILGQG…RAKTTKHNWL (284 aa)) enclose the Protein kinase domain. Residues 114-122 (LGQGGQWTV) and Lys136 each bind ATP. The residue at position 181 (Tyr181) is a Phosphotyrosine. Asp233 functions as the Proton acceptor in the catalytic mechanism. Thr267 and Thr272 each carry phosphothreonine. At Tyr280 the chain carries Phosphotyrosine.

This sequence belongs to the protein kinase superfamily. Ser/Thr protein kinase family.

It is found in the membrane. It catalyses the reaction L-seryl-[protein] + ATP = O-phospho-L-seryl-[protein] + ADP + H(+). The catalysed reaction is L-threonyl-[protein] + ATP = O-phospho-L-threonyl-[protein] + ADP + H(+). In terms of biological role, putative serine/threonine-protein kinase that may function as a signaling receptor of extracellular matrix component. This is Putative wall-associated receptor kinase-like 16 (WAKL16) from Arabidopsis thaliana (Mouse-ear cress).